The sequence spans 326 residues: Isopenicillin N synthase (326 aa).

Isopenicillin N contacts are provided by Arg-84, Tyr-88, and Tyr-186. N-[(5S)-5-amino-5-carboxypentanoyl]-L-cysteinyl-D-valine-binding residues include Arg-84, Tyr-88, Tyr-186, His-209, and Asp-211. The region spanning 183 to 283 is the Fe2OG dioxygenase domain; the sequence is LIRYPFLENY…RLSIPFFANL (101 aa). Residues His-209, Asp-211, and His-265 each coordinate Fe(2+). Arg-274 is a binding site for 2-oxoglutarate. Ser-276 lines the isopenicillin N pocket. Residue Ser-276 coordinates N-[(5S)-5-amino-5-carboxypentanoyl]-L-cysteinyl-D-valine.

This sequence belongs to the iron/ascorbate-dependent oxidoreductase family. The cofactor is Fe cation. It depends on L-ascorbate as a cofactor.

The enzyme catalyses N-[(5S)-5-amino-5-carboxypentanoyl]-L-cysteinyl-D-valine + O2 = isopenicillin N + 2 H2O. It functions in the pathway antibiotic biosynthesis; penicillin G biosynthesis; penicillin G from L-alpha-aminoadipate and L-cysteine and L-valine: step 2/3. Its function is as follows. Removes, in the presence of oxygen, 4 hydrogen atoms from delta-L-(alpha-aminoadipyl)-L-cysteinyl-D-valine (ACV) to form the azetidinone and thiazolidine rings of isopenicillin. The chain is Isopenicillin N synthase (pcbC) from Lysobacter lactamgenus.